The chain runs to 615 residues: Alpha-1,3-galactosidase B (615 aa).

A signal peptide spans 1–23 (MRTFLSLKTCLLSALLLCVNSIA). 6 PbH1 repeats span residues 282 to 313 (SKNI…HFMG), 423 to 445 (TPDA…LVST), 446 to 467 (PGKV…LIAG), 478 to 500 (VKDV…YQFC), 520 to 541 (HRNI…LFAR), and 543 to 573 (VNGL…TLEA).

Belongs to the glycosyl hydrolase 110 family. B subfamily.

The enzyme catalyses Hydrolysis of terminal, non-reducing branched (1-&gt;3)-alpha-D-galactosidic residues, producing free D-galactose.. It catalyses the reaction Hydrolysis of terminal, non-reducing linear (1-&gt;3)-alpha-D-galactosidic residues, producing free D-galactose.. It carries out the reaction Hydrolysis of terminal, non-reducing alpha-D-galactose residues in alpha-D-galactosides, including galactose oligosaccharides, galactomannans and galactolipids.. Its function is as follows. Alpha-galactosidase. Removes both branched alpha-1,3-linked galactose residues of blood group B antigens and linear alpha-1,3-linked galactose structures. This Bacteroides thetaiotaomicron (strain ATCC 29148 / DSM 2079 / JCM 5827 / CCUG 10774 / NCTC 10582 / VPI-5482 / E50) protein is Alpha-1,3-galactosidase B (glaB).